A 497-amino-acid chain; its full sequence is MTLLDSDSRQSAEVLPAAGPAPDRPRTYQVRTFGCQMNMHDSERIAGLLEAAGYVRAADDEPADVVVFNTCAVRENADNRLYGNLGLLLPVKKAKPDMQIAVGGCLAQKDKGDIVRRAPWVDVVFGTHNIEALPVLLERARIAREAQVEIREALEVFPSTLPSRRESVYAAWVAISVGCNNTCTFCIVPSLRGRERDRRPGDILREIQTLVADGVLEVTLLGQNVNSYGVDFGDRQAFAKLLRACGTIDGLERVRFTSPHPRDFTDDVIAAMAETPNVMPQLHMPLQSGSDAVLRRMRRSYRKEKYLDIISRVRSAIPDAAITTDIIVGFPGETEDDFAETLDVVRKARFAGAFTFQYSKRPGTPAAEMPDQVPPDVVADRFARLVALVEQIALEENQAQVGRVVEVLVAEGEGRKDAETHRMSGRAPDNRLVHFRATDARPGDVVTVAVTQAAPHCLIADQVLGVRRTRAGDAWEARRSVRPSGVLLGMPALRPRT.

Residues 1 to 10 (MTLLDSDSRQ) are compositionally biased toward basic and acidic residues. The disordered stretch occupies residues 1–26 (MTLLDSDSRQSAEVLPAAGPAPDRPR). Residues 26–142 (RTYQVRTFGC…LPVLLERARI (117 aa)) enclose the MTTase N-terminal domain. Residues Cys35, Cys71, Cys105, Cys179, Cys183, and Cys186 each contribute to the [4Fe-4S] cluster site. A Radical SAM core domain is found at 165-395 (RESVYAAWVA…VALVEQIALE (231 aa)). The TRAM domain maps to 398-464 (QAQVGRVVEV…PHCLIADQVL (67 aa)).

This sequence belongs to the methylthiotransferase family. MiaB subfamily. As to quaternary structure, monomer. Requires [4Fe-4S] cluster as cofactor.

It is found in the cytoplasm. It carries out the reaction N(6)-dimethylallyladenosine(37) in tRNA + (sulfur carrier)-SH + AH2 + 2 S-adenosyl-L-methionine = 2-methylsulfanyl-N(6)-dimethylallyladenosine(37) in tRNA + (sulfur carrier)-H + 5'-deoxyadenosine + L-methionine + A + S-adenosyl-L-homocysteine + 2 H(+). In terms of biological role, catalyzes the methylthiolation of N6-(dimethylallyl)adenosine (i(6)A), leading to the formation of 2-methylthio-N6-(dimethylallyl)adenosine (ms(2)i(6)A) at position 37 in tRNAs that read codons beginning with uridine. This is tRNA-2-methylthio-N(6)-dimethylallyladenosine synthase from Acidothermus cellulolyticus (strain ATCC 43068 / DSM 8971 / 11B).